The chain runs to 526 residues: piRNA biogenesis factor prde-1 (526 aa).

Positions 436 to 526 (EAKEEPIDKK…RRRGCEIRRK (91 aa)) are disordered. The span at 439-448 (EEPIDKKKDP) shows a compositional bias: basic and acidic residues. Positions 458-467 (GKKRRGRKPK) are enriched in basic residues. Residues 468–487 (KKDDPKMELKDEVKDLKDFV) show a composition bias toward basic and acidic residues. Positions 489-498 (EESTSASSSA) are enriched in low complexity.

Expressed in male and female germ cells.

Its subcellular location is the nucleus. It is found in the chromosome. Its function is as follows. Nuclear factor required for the production of piwi-interacting RNA (piRNA) precursors. Specifically required for piRNAs produced from loci associated with the Ruby motif. Promotes binding of the transcription factor snpc-4 at piRNA genomic clusters. Required for normal fertility. This is piRNA biogenesis factor prde-1 from Caenorhabditis elegans.